The sequence spans 486 residues: Cobyric acid synthase (486 aa).

In terms of domain architecture, GATase cobBQ-type spans 248–439 (VLRIVVPALP…LHGLFDTPHA (192 aa)). Cysteine 328 (nucleophile) is an active-site residue. Histidine 431 is a catalytic residue.

Belongs to the CobB/CobQ family. CobQ subfamily.

It participates in cofactor biosynthesis; adenosylcobalamin biosynthesis. Functionally, catalyzes amidations at positions B, D, E, and G on adenosylcobyrinic A,C-diamide. NH(2) groups are provided by glutamine, and one molecule of ATP is hydrogenolyzed for each amidation. In Burkholderia mallei (strain ATCC 23344), this protein is Cobyric acid synthase.